The primary structure comprises 636 residues: Threonine--tRNA ligase (636 aa).

The TGS domain maps to 1–61 (MINITLPDDS…RNDCAVRLIT (61 aa)). The catalytic stretch occupies residues 238-528 (DHRKIGTRMG…LVEHFAGKFP (291 aa)). 3 residues coordinate Zn(2+): Cys329, His380, and His505.

It belongs to the class-II aminoacyl-tRNA synthetase family. In terms of assembly, homodimer. Requires Zn(2+) as cofactor.

It localises to the cytoplasm. It catalyses the reaction tRNA(Thr) + L-threonine + ATP = L-threonyl-tRNA(Thr) + AMP + diphosphate + H(+). Its function is as follows. Catalyzes the attachment of threonine to tRNA(Thr) in a two-step reaction: L-threonine is first activated by ATP to form Thr-AMP and then transferred to the acceptor end of tRNA(Thr). Also edits incorrectly charged L-seryl-tRNA(Thr). The polypeptide is Threonine--tRNA ligase (Desulforapulum autotrophicum (strain ATCC 43914 / DSM 3382 / VKM B-1955 / HRM2) (Desulfobacterium autotrophicum)).